Here is a 526-residue protein sequence, read N- to C-terminus: Bifunctional purine biosynthesis protein PurH (526 aa).

Residues 1-147 (MTKIERALIS…KNWAHVAIVT (147 aa)) enclose the MGS-like domain.

This sequence belongs to the PurH family.

The enzyme catalyses (6R)-10-formyltetrahydrofolate + 5-amino-1-(5-phospho-beta-D-ribosyl)imidazole-4-carboxamide = 5-formamido-1-(5-phospho-D-ribosyl)imidazole-4-carboxamide + (6S)-5,6,7,8-tetrahydrofolate. It carries out the reaction IMP + H2O = 5-formamido-1-(5-phospho-D-ribosyl)imidazole-4-carboxamide. Its pathway is purine metabolism; IMP biosynthesis via de novo pathway; 5-formamido-1-(5-phospho-D-ribosyl)imidazole-4-carboxamide from 5-amino-1-(5-phospho-D-ribosyl)imidazole-4-carboxamide (10-formyl THF route): step 1/1. It functions in the pathway purine metabolism; IMP biosynthesis via de novo pathway; IMP from 5-formamido-1-(5-phospho-D-ribosyl)imidazole-4-carboxamide: step 1/1. In Laribacter hongkongensis (strain HLHK9), this protein is Bifunctional purine biosynthesis protein PurH.